The sequence spans 406 residues: FBD-associated F-box protein At1g60410 (406 aa).

The 51-residue stretch at 9–59 (KDRLSDLPCHLLCRILSNLSTKESVRTSVLSPRWSNLWSLVSVLDLDFQDF) folds into the F-box domain. The FBD domain maps to 355 to 405 (MEEIKLSPVPQCVLSSLDFLQLKAPSTPSKMKLATYFRKKCTRLTKMLLSG).

This is FBD-associated F-box protein At1g60410 from Arabidopsis thaliana (Mouse-ear cress).